A 141-amino-acid chain; its full sequence is uncharacterized protein (141 aa).

Helical transmembrane passes span 12–32 and 35–55; these read GIAG…TLVT and PGRV…SATW.

It localises to the cell membrane. This is an uncharacterized protein from Mycobacterium tuberculosis (strain CDC 1551 / Oshkosh).